Here is a 479-residue protein sequence, read N- to C-terminus: Protein nucleotidyltransferase YdiU (479 aa).

8 residues coordinate ATP: glycine 83, glycine 85, arginine 86, lysine 106, aspartate 118, glycine 119, arginine 169, and arginine 176. The Proton acceptor role is filled by aspartate 245. Mg(2+)-binding residues include asparagine 246 and aspartate 255. Position 255 (aspartate 255) interacts with ATP.

This sequence belongs to the SELO family. Requires Mg(2+) as cofactor. Mn(2+) serves as cofactor.

It carries out the reaction L-seryl-[protein] + ATP = 3-O-(5'-adenylyl)-L-seryl-[protein] + diphosphate. The catalysed reaction is L-threonyl-[protein] + ATP = 3-O-(5'-adenylyl)-L-threonyl-[protein] + diphosphate. The enzyme catalyses L-tyrosyl-[protein] + ATP = O-(5'-adenylyl)-L-tyrosyl-[protein] + diphosphate. It catalyses the reaction L-histidyl-[protein] + UTP = N(tele)-(5'-uridylyl)-L-histidyl-[protein] + diphosphate. It carries out the reaction L-seryl-[protein] + UTP = O-(5'-uridylyl)-L-seryl-[protein] + diphosphate. The catalysed reaction is L-tyrosyl-[protein] + UTP = O-(5'-uridylyl)-L-tyrosyl-[protein] + diphosphate. Its function is as follows. Nucleotidyltransferase involved in the post-translational modification of proteins. It can catalyze the addition of adenosine monophosphate (AMP) or uridine monophosphate (UMP) to a protein, resulting in modifications known as AMPylation and UMPylation. The protein is Protein nucleotidyltransferase YdiU of Erwinia tasmaniensis (strain DSM 17950 / CFBP 7177 / CIP 109463 / NCPPB 4357 / Et1/99).